The following is an 86-amino-acid chain: Large ribosomal subunit protein bL31B (86 aa).

The protein belongs to the bacterial ribosomal protein bL31 family. Type B subfamily. As to quaternary structure, part of the 50S ribosomal subunit.

The chain is Large ribosomal subunit protein bL31B from Erwinia tasmaniensis (strain DSM 17950 / CFBP 7177 / CIP 109463 / NCPPB 4357 / Et1/99).